The sequence spans 347 residues: Heat-inducible transcription repressor HrcA (347 aa).

Belongs to the HrcA family.

Its function is as follows. Negative regulator of class I heat shock genes (grpE-dnaK-dnaJ and groELS operons). Prevents heat-shock induction of these operons. The chain is Heat-inducible transcription repressor HrcA from Lactococcus lactis subsp. lactis (strain IL1403) (Streptococcus lactis).